The sequence spans 153 residues: Ribosome maturation factor RimP (153 aa).

Belongs to the RimP family.

The protein localises to the cytoplasm. Required for maturation of 30S ribosomal subunits. This is Ribosome maturation factor RimP from Desulforamulus reducens (strain ATCC BAA-1160 / DSM 100696 / MI-1) (Desulfotomaculum reducens).